A 415-amino-acid chain; its full sequence is Serine/threonine transporter SstT (415 aa).

8 consecutive transmembrane segments (helical) span residues 23-43, 47-67, 85-105, 144-164, 181-201, 220-240, 303-323, and 333-353; these read ILVGLVLGILLAWLSKPAAIA, LGTLFVGALKAVAPVLVLMLV, ILWLYLLGTFSAALTAVLFSF, ALLKGNYIGILVWAVGLGFAL, AVTFMVKLVIRFAPIGIFGLV, LMVLIGCMFLVALVINPLIVF, GAAITITVLTLAAVHTLGIAV, and VVASLCACGASGVAGGSLLLI.

The protein belongs to the dicarboxylate/amino acid:cation symporter (DAACS) (TC 2.A.23) family.

The protein resides in the cell inner membrane. The catalysed reaction is L-serine(in) + Na(+)(in) = L-serine(out) + Na(+)(out). It carries out the reaction L-threonine(in) + Na(+)(in) = L-threonine(out) + Na(+)(out). In terms of biological role, involved in the import of serine and threonine into the cell, with the concomitant import of sodium (symport system). In Cronobacter sakazakii (strain ATCC BAA-894) (Enterobacter sakazakii), this protein is Serine/threonine transporter SstT.